Here is a 438-residue protein sequence, read N- to C-terminus: Serine hydroxymethyltransferase (438 aa).

Gly133–Ile135 serves as a coordination point for (6S)-5,6,7,8-tetrahydrofolate. Lys239 carries the N6-(pyridoxal phosphate)lysine modification.

This sequence belongs to the SHMT family. Homodimer. Requires pyridoxal 5'-phosphate as cofactor.

The protein resides in the cytoplasm. The catalysed reaction is 5,10-methylenetetrahydromethanopterin + glycine + H2O = 5,6,7,8-tetrahydromethanopterin + L-serine. It functions in the pathway amino-acid biosynthesis; glycine biosynthesis; glycine from L-serine: step 1/1. Functionally, catalyzes the reversible interconversion of serine and glycine with tetrahydromethanopterin (H4MPT) serving as the one-carbon carrier. Also exhibits a pteridine-independent aldolase activity toward beta-hydroxyamino acids, producing glycine and aldehydes, via a retro-aldol mechanism. The polypeptide is Serine hydroxymethyltransferase (Archaeoglobus fulgidus (strain ATCC 49558 / DSM 4304 / JCM 9628 / NBRC 100126 / VC-16)).